The following is a 456-amino-acid chain: Ribulose bisphosphate carboxylase large chain (456 aa).

Position 7 is an N6,N6,N6-trimethyllysine (Lys-7). The substrate site is built by Asn-116 and Thr-166. Lys-168 (proton acceptor) is an active-site residue. Residue Lys-170 participates in substrate binding. Mg(2+) is bound by residues Lys-194, Asp-196, and Glu-197. N6-carboxylysine is present on Lys-194. Residue His-287 is the Proton acceptor of the active site. Arg-288, His-320, and Ser-372 together coordinate substrate.

Belongs to the RuBisCO large chain family. Type I subfamily. Heterohexadecamer of 8 large chains and 8 small chains; disulfide-linked. The disulfide link is formed within the large subunit homodimers. It depends on Mg(2+) as a cofactor. Post-translationally, the disulfide bond which can form in the large chain dimeric partners within the hexadecamer appears to be associated with oxidative stress and protein turnover.

It localises to the plastid. The protein localises to the chloroplast. It carries out the reaction 2 (2R)-3-phosphoglycerate + 2 H(+) = D-ribulose 1,5-bisphosphate + CO2 + H2O. It catalyses the reaction D-ribulose 1,5-bisphosphate + O2 = 2-phosphoglycolate + (2R)-3-phosphoglycerate + 2 H(+). Its function is as follows. RuBisCO catalyzes two reactions: the carboxylation of D-ribulose 1,5-bisphosphate, the primary event in carbon dioxide fixation, as well as the oxidative fragmentation of the pentose substrate in the photorespiration process. Both reactions occur simultaneously and in competition at the same active site. In Barnardia japonica (Chinese squill), this protein is Ribulose bisphosphate carboxylase large chain.